Reading from the N-terminus, the 209-residue chain is Lysine-rich arabinogalactan protein 18 (209 aa).

Residues 1–21 (MDRNFLLTVTLICIVVAGVGG) form the signal peptide. Residues 21-185 (GQSPISSPTK…PSADDQSGAA (165 aa)) are disordered. Residues 23–79 (SPISSPTKSPTTPSAPTTSPTKSPAVTSPTTAPAKTPTASASSPVESPKSPAPVSES) are compositionally biased toward low complexity. Composition is skewed to pro residues over residues 80–95 (SPPPTPVPESSPPVPA) and 103–119 (SSPPVPAPVADSPPAPV). Residues 132 to 145 (SKHKKTTKKSKKHQ) show a composition bias toward basic residues. A compositionally biased stretch (pro residues) spans 149–164 (APAPELLGPPAPPTES). Gly183 is lipidated: GPI-anchor amidated glycine. Residues 184 to 209 (AASTRVLRNVAVGAVATAWAVLVMAF) constitute a propeptide, removed in mature form.

The protein belongs to the lysine-rich AGP family. O-glycosylated on the hydroxyproline residues. Predominantly expressed in flowers, and moderately expressed in roots, stems and young leaves.

The protein resides in the cell membrane. Its function is as follows. Proteoglycan that seems to be implicated in diverse developmental roles such as differentiation, cell-cell recognition, embryogenesis and programmed cell death. This is Lysine-rich arabinogalactan protein 18 (AGP18) from Arabidopsis thaliana (Mouse-ear cress).